Here is an 86-residue protein sequence, read N- to C-terminus: Sec-independent protein translocase protein TatA (86 aa).

Residues 1–21 (MGISIWQLLIILAIVLVLFGA) traverse the membrane as a helical segment.

This sequence belongs to the TatA/E family. In terms of assembly, the Tat system comprises two distinct complexes: a TatABC complex, containing multiple copies of TatA, TatB and TatC subunits, and a separate TatA complex, containing only TatA subunits. Substrates initially bind to the TatABC complex, which probably triggers association of the separate TatA complex to form the active translocon.

Its subcellular location is the cell inner membrane. Part of the twin-arginine translocation (Tat) system that transports large folded proteins containing a characteristic twin-arginine motif in their signal peptide across membranes. TatA could form the protein-conducting channel of the Tat system. In Hydrogenovibrio crunogenus (strain DSM 25203 / XCL-2) (Thiomicrospira crunogena), this protein is Sec-independent protein translocase protein TatA.